The chain runs to 208 residues: Putative 3-methyladenine DNA glycosylase (208 aa).

The disordered stretch occupies residues Met1 to Glu20.

Belongs to the DNA glycosylase MPG family.

The sequence is that of Putative 3-methyladenine DNA glycosylase from Mesorhizobium japonicum (strain LMG 29417 / CECT 9101 / MAFF 303099) (Mesorhizobium loti (strain MAFF 303099)).